Here is a 463-residue protein sequence, read N- to C-terminus: Lactadherin (463 aa).

The first 22 residues, Met1–Ala22, serve as a signal peptide directing secretion. 2 consecutive EGF-like domains span residues Ser24–Asn61 and Glu64–Glu108. 3 disulfides stabilise this stretch: Cys28–Cys39, Cys33–Cys49, and Cys51–Cys60. An N-linked (GlcNAc...) asparagine glycan is attached at Asn61. 6 disulfides stabilise this stretch: Cys68–Cys79, Cys73–Cys96, Cys98–Cys107, Cys148–Cys303, Cys290–Cys294, and Cys308–Cys463. A Cell attachment site motif is present at residues Arg87 to Asp89. F5/8 type C domains are found at residues Cys148 to Cys303 and Cys308 to Cys463. N-linked (GlcNAc...) asparagine glycosylation occurs at Asn266. Residues Asn316 and Asn426 are each glycosylated (N-linked (GlcNAc...) asparagine).

In terms of processing, N-glycosylated. Isoform 1 also exists in both an O-glycosylated and a non-O-glycosylated form. As to expression, mammary epithelial cell surfaces and spermatozoan. Isoform 2 is present in brain, heart, kidney and spleen and at low levels in lung, liver, small intestine and testis.

Its subcellular location is the membrane. The protein resides in the secreted. The protein localises to the cytoplasmic vesicle. It is found in the secretory vesicle. It localises to the acrosome membrane. Functionally, contributes to phagocytic removal of apoptotic cells in many tissues. Specific ligand for the alpha-v/beta-3 and alpha-v/beta-5 receptors. Also binds to phosphatidylserine-enriched cell surfaces in a receptor-independent manner. Zona pellucida-binding protein which may play a role in gamete interaction. Plays an important role in the maintenance of intestinal epithelial homeostasis and the promotion of mucosal healing. Promotes VEGF-dependent neovascularization. The polypeptide is Lactadherin (Mfge8) (Mus musculus (Mouse)).